The sequence spans 129 residues: Prefoldin subunit 6 (129 aa).

An N-acetylalanine modification is found at Ala-2. An N6-acetyllysine modification is found at Lys-21. The residue at position 66 (Lys-66) is an N6-acetyllysine; alternate. A Glycyl lysine isopeptide (Lys-Gly) (interchain with G-Cter in SUMO1); alternate cross-link involves residue Lys-66. A Glycyl lysine isopeptide (Lys-Gly) (interchain with G-Cter in SUMO2); alternate cross-link involves residue Lys-66.

It belongs to the prefoldin subunit beta family. Heterohexamer of two PFD-alpha type and four PFD-beta type subunits. Component of the PAQosome complex which is responsible for the biogenesis of several protein complexes and which consists of R2TP complex members RUVBL1, RUVBL2, RPAP3 and PIH1D1, URI complex members PFDN2, PFDN6, PDRG1, UXT and URI1 as well as ASDURF, POLR2E and DNAAF10/WDR92.

Binds specifically to cytosolic chaperonin (c-CPN) and transfers target proteins to it. Binds to nascent polypeptide chain and promotes folding in an environment in which there are many competing pathways for nonnative proteins. The chain is Prefoldin subunit 6 (PFDN6) from Homo sapiens (Human).